A 108-amino-acid polypeptide reads, in one-letter code: uncharacterized protein (108 aa).

The segment at Met-1–Leu-23 is disordered.

This is an uncharacterized protein from Ureaplasma parvum serovar 3 (strain ATCC 700970).